The sequence spans 546 residues: Phosphatidylinositol 4-phosphate 5-kinase type-1 alpha (546 aa).

The PIPK domain maps to 65–433; that stretch reads TSSALKGAIQ…RFQRFMCNTV (369 aa). Lysine 87 participates in a covalent cross-link: Glycyl lysine isopeptide (Lys-Gly) (interchain with G-Cter in ubiquitin). The segment at 441–522 is disordered; it reads PSPTKKFRSG…PGPSFSPAVG (82 aa). Residues 449 to 461 are compositionally biased toward low complexity; the sequence is SGPSFSRRSGPSG. The span at 462-471 shows a compositional bias: polar residues; it reads NSCTPSQPTA. Positions 473–493 are enriched in basic and acidic residues; the sequence is GEHKAQVTTKAEVEPDIHLGR.

As to quaternary structure, interacts with RAC1. Interacts with TUT1. Forms a complex with CDH1/E-cadherin, CTNNB1/beta-catenin and CTNND1 at the plasma membrane upon calcium stimulation. Found in a ternary complex with IRS1 and DGKZ in the absence of insulin stimulation. Interacts with DGKZ. Interacts with PIP4K2C; the interaction inhibits PIP5K1A kinase activity.

It is found in the cell membrane. Its subcellular location is the cytoplasm. It localises to the nucleus. The protein resides in the nucleus speckle. The protein localises to the cell projection. It is found in the ruffle. Its subcellular location is the lamellipodium. It carries out the reaction a 1,2-diacyl-sn-glycero-3-phospho-(1D-myo-inositol 4-phosphate) + ATP = a 1,2-diacyl-sn-glycero-3-phospho-(1D-myo-inositol-4,5-bisphosphate) + ADP + H(+). The enzyme catalyses 1-octadecanoyl-2-(5Z,8Z,11Z,14Z)-eicosatetraenoyl-sn-glycero-3-phospho-1D-myo-inositol 4-phosphate + ATP = 1-octadecanoyl-2-(5Z,8Z,11Z,14Z)-eicosatetraenoyl-sn-glycero-3-phospho-1D-myo-inositol 4,5-bisphosphate + ADP + H(+). The catalysed reaction is 1,2-dihexadecanoyl-sn-glycero-3-phospho-(1D-myo-inositol-4-phosphate) + ATP = 1,2-dihexadecanoyl-sn-glycero-3-phospho-(1D-myo-inositol-4,5-bisphosphate) + ADP + H(+). It catalyses the reaction 1-octadecanoyl-2-(9Z)-octadecenoyl-sn-glycero-3-phospho-1D-myo-inositol 4-phosphate + ATP = 1-octadecanoyl-2-(9Z)-octadecenoyl-sn-glycero-3-phospho-1D-myo-inositol 4,5-bisphosphate + ADP + H(+). It carries out the reaction 1-octadecanoyl-2-(9Z)-octadecenoyl-sn-glycero-3-phospho-1D-myo-inositol + ATP = 1-octadecanoyl-2-(9Z)-octadecenoyl-sn-glycero-3-phospho-1D-myo-inositol 5-phosphate + ADP + H(+). The enzyme catalyses 1-octadecanoyl-2-(9Z,12Z)-octadecadienoyl-sn-glycero-3-phospho-1D-myo-inositol + ATP = 1-octadecanoyl-2-(9Z,12Z)-octadecadienoyl-sn-glycero-3-phospho-1D-myo-inositol 5-phosphate + ADP + H(+). The catalysed reaction is 1-octadecanoyl-2-(5Z,8Z,11Z,14Z-eicosatetraenoyl)-sn-glycero-3-phospho-(1D-myo-inositol) + ATP = 1-octadecanoyl-2-(5Z,8Z,11Z,14Z)-eicosatetraenoyl-sn-glycero-3-phospho-1D-myo-inositol 5-phosphate + ADP + H(+). It catalyses the reaction 1,2-di-(9Z,12Z)-octadecadienoyl-sn-glycero-3-phospho-1D-myo-inositol + ATP = 1,2-di(9Z,12Z)-octadecadienoyl-sn-glycero-3-phospho-1D-myo-inositol 5-phosphate + ADP + H(+). In terms of biological role, catalyzes the phosphorylation of phosphatidylinositol 4-phosphate (PtdIns(4)P/PI4P) to form phosphatidylinositol 4,5-bisphosphate (PtdIns(4,5)P2/PIP2), a lipid second messenger that regulates several cellular processes such as signal transduction, vesicle trafficking, actin cytoskeleton dynamics, cell adhesion, and cell motility. PtdIns(4,5)P2 can directly act as a second messenger or can be utilized as a precursor to generate other second messengers: inositol 1,4,5-trisphosphate (IP3), diacylglycerol (DAG) or phosphatidylinositol-3,4,5-trisphosphate (PtdIns(3,4,5)P3/PIP3). PIP5K1A-mediated phosphorylation of PtdIns(4)P is the predominant pathway for PtdIns(4,5)P2 synthesis. Can also use phosphatidylinositol (PtdIns) as substrate in vitro. Together with PIP5K1C, is required for phagocytosis, both enzymes regulating different types of actin remodeling at sequential steps. Promotes particle ingestion by activating the WAS GTPase-binding protein that induces Arp2/3 dependent actin polymerization at the nascent phagocytic cup. Together with PIP5K1B, is required, after stimulation by G-protein coupled receptors, for the synthesis of IP3 that will induce stable platelet adhesion. Recruited to the plasma membrane by the E-cadherin/beta-catenin complex where it provides the substrate PtdIns(4,5)P2 for the production of PtdIns(3,4,5)P3, IP3 and DAG, that will mobilize internal calcium and drive keratinocyte differentiation. Positively regulates insulin-induced translocation of SLC2A4 to the cell membrane in adipocytes. Together with PIP5K1C has a role during embryogenesis. Independently of its catalytic activity, is required for membrane ruffling formation, actin organization and focal adhesion formation during directional cell migration by controlling integrin-induced translocation of the small GTPase RAC1 to the plasma membrane. Also functions in the nucleus where it acts as an activator of TUT1 adenylyltransferase activity in nuclear speckles, thereby regulating mRNA polyadenylation of a select set of mRNAs. The polypeptide is Phosphatidylinositol 4-phosphate 5-kinase type-1 alpha (Rattus norvegicus (Rat)).